The chain runs to 199 residues: FMN-dependent NADH:quinone oxidoreductase (199 aa).

Position 17-19 (17-19 (SYS)) interacts with FMN.

It belongs to the azoreductase type 1 family. As to quaternary structure, homodimer. It depends on FMN as a cofactor.

It catalyses the reaction 2 a quinone + NADH + H(+) = 2 a 1,4-benzosemiquinone + NAD(+). The catalysed reaction is N,N-dimethyl-1,4-phenylenediamine + anthranilate + 2 NAD(+) = 2-(4-dimethylaminophenyl)diazenylbenzoate + 2 NADH + 2 H(+). In terms of biological role, quinone reductase that provides resistance to thiol-specific stress caused by electrophilic quinones. Also exhibits azoreductase activity. Catalyzes the reductive cleavage of the azo bond in aromatic azo compounds to the corresponding amines. The polypeptide is FMN-dependent NADH:quinone oxidoreductase (Mycoplasmopsis synoviae (strain 53) (Mycoplasma synoviae)).